The sequence spans 333 residues: Tryptophan--tRNA ligase (333 aa).

Residues 11–13 (QPS) and 19–20 (GN) each bind ATP. A 'HIGH' region motif is present at residues 12–20 (PSGELTIGN). Asp135 lines the L-tryptophan pocket. ATP is bound by residues 147 to 149 (GED), Val186, and 195 to 199 (KMSKS). A 'KMSKS' region motif is present at residues 195–199 (KMSKS).

It belongs to the class-I aminoacyl-tRNA synthetase family. As to quaternary structure, homodimer.

The protein localises to the cytoplasm. It catalyses the reaction tRNA(Trp) + L-tryptophan + ATP = L-tryptophyl-tRNA(Trp) + AMP + diphosphate + H(+). Catalyzes the attachment of tryptophan to tRNA(Trp). This Pasteurella multocida (strain Pm70) protein is Tryptophan--tRNA ligase.